Consider the following 209-residue polypeptide: MTTGKFIVLEGIEGAGKTTARDSIVRALHAHGIHDIVFTREPGGTPLAEKLRQLIKHETEEPVTDKAELLMLYAARIQLVENVIKPALAQGKWVIGDRHDMSSQAYQGGGRQLDQHLLHTLKQTILGEFEPDLTLYLDIDPVLGLSRAKGRGALDRIEQQNLDFFHRTRQRYQELVRHNPKAVTIDASQTMSKVAEDVESAIETWLTTR.

ATP is bound at residue 11-18 (GIEGAGKT).

Belongs to the thymidylate kinase family.

It catalyses the reaction dTMP + ATP = dTDP + ADP. Functionally, phosphorylation of dTMP to form dTDP in both de novo and salvage pathways of dTTP synthesis. The sequence is that of Thymidylate kinase (tmk) from Pasteurella multocida (strain Pm70).